We begin with the raw amino-acid sequence, 1849 residues long: Breast cancer type 1 susceptibility protein homolog (1849 aa).

Residue Met1 is modified to N-acetylmethionine. Residues Cys24–Lys65 form an RING-type zinc finger. Ser114 bears the Phosphoserine mark. Glycyl lysine isopeptide (Lys-Gly) (interchain with G-Cter in SUMO2) cross-links involve residues Lys301 and Lys339. A phosphoserine mark is found at Ser395, Ser398, Ser423, and Ser434. Residues Lys457 and Lys517 each participate in a glycyl lysine isopeptide (Lys-Gly) (interchain with G-Cter in SUMO2) cross-link. The segment covering Lys530–Cys542 has biased composition (basic and acidic residues). 2 disordered regions span residues Lys530 to Arg558 and Glu620 to Gln662. A phosphoserine mark is found at Ser691, Ser711, and Ser720. Residues Ser882–His912 are disordered. The segment covering Gln888–Ser910 has biased composition (basic and acidic residues). Lys981 is covalently cross-linked (Glycyl lysine isopeptide (Lys-Gly) (interchain with G-Cter in SUMO2)). Ser982 bears the Phosphoserine; by CHEK2 mark. Ser1002 is modified (phosphoserine). Over residues Asn1036–Asn1061 the composition is skewed to low complexity. The tract at residues Asn1036–Arg1070 is disordered. Residue Lys1073 forms a Glycyl lysine isopeptide (Lys-Gly) (interchain with G-Cter in SUMO2) linkage. Phosphoserine occurs at positions 1138, 1184, 1211, 1212, 1274, 1323, 1330, 1336, and 1382. Residues Phe1172–Ser1211 are disordered. Disordered regions lie at residues Tyr1321 to Thr1389, Val1412 to Gly1433, and Ser1452 to Ala1493. A compositionally biased stretch (acidic residues) spans Ser1336 to Leu1360. 2 stretches are compositionally biased toward polar residues: residues Glu1370–Thr1389 and Ser1418–Ala1429. Thr1389 carries the post-translational modification Phosphothreonine. The interaction with PALB2 stretch occupies residues Arg1392 to Gln1419. Residues Ser1418, Ser1452, and Ser1518 each carry the phosphoserine modification. Disordered regions lie at residues Ser1562–Ala1590 and Arg1621–Lys1640. 2 stretches are compositionally biased toward basic and acidic residues: residues His1566 to His1582 and Arg1621 to Glu1631. BRCT domains lie at Arg1642–Val1729 and Arg1749–Val1848.

Heterodimer with BARD1. Part of the BRCA1-associated genome surveillance complex (BASC), which contains BRCA1, MSH2, MSH6, MLH1, ATM, BLM, PMS2 and the MRE11-RAD50-NBN protein (MRN) complex. This association could be a dynamic process changing throughout the cell cycle and within subnuclear domains. Component of the BRCA1-A complex, at least composed of BRCA1, BARD1, UIMC1/RAP80, ABRAXAS1, BRCC3/BRCC36, BABAM2 and BABAM1/NBA1. Interacts (via the BRCT domains) with ABRAXAS1 (phosphorylated form); this is important for recruitment to sites of DNA damage. Can form a heterotetramer with two molecules of ABRAXAS1 (phosphorylated form). Component of the BRCA1-RBBP8 complex. Interacts (via the BRCT domains) with RBBP8 ('Ser-327' phosphorylated form); the interaction ubiquitinates RBBP8, regulates CHEK1 activation, and involves RBBP8 in BRCA1-dependent G2/M checkpoint control on DNA damage. Associates with RNA polymerase II holoenzyme. Interacts with SMC1A, NELFB, DCLRE1C, CLSPN. CHEK1, CHEK2, BAP1, BRCC3, UBXN1 and PCLAF. Interacts (via BRCT domains) with BRIP1 (phosphorylated form). Interacts with FANCD2 (ubiquitinated form). Interacts with H2AX (phosphorylated on 'Ser-140'). Interacts (via the BRCT domains) with ACACA (phosphorylated form); the interaction prevents dephosphorylation of ACACA. Part of a BRCA complex containing BRCA1, BRCA2 and PALB2. Interacts directly with PALB2; the interaction is essential for its function in HRR. Interacts directly with BRCA2; the interaction occurs only in the presence of PALB2 which serves as the bridging protein. Interacts (via the BRCT domains) with LMO4; the interaction represses the transcriptional activity of BRCA1. Interacts (via the BRCT domains) with CCAR2 (via N-terminus); the interaction represses the transcriptional activator activity of BRCA1. Interacts with EXD2. Interacts (via C-terminus) with DHX9; this interaction is direct and links BRCA1 to the RNA polymerase II holoenzyme. Interacts with DNA helicase ZGRF1; the interaction is increased following DNA damage induction. Phosphorylated in response to IR, UV, and various stimuli that cause checkpoint activation, probably by ATM or ATR. Phosphorylation at Ser-982 by CHEK2 regulates mitotic spindle assembly. Phosphorylation by AURKA regulates centrosomal microtubule nucleation. In terms of processing, autoubiquitinated, undergoes 'Lys-6'-linked polyubiquitination. 'Lys-6'-linked polyubiquitination does not promote degradation.

It localises to the nucleus. Its subcellular location is the chromosome. The protein resides in the cytoplasm. It carries out the reaction S-ubiquitinyl-[E2 ubiquitin-conjugating enzyme]-L-cysteine + [acceptor protein]-L-lysine = [E2 ubiquitin-conjugating enzyme]-L-cysteine + N(6)-ubiquitinyl-[acceptor protein]-L-lysine.. Its pathway is protein modification; protein ubiquitination. In terms of biological role, E3 ubiquitin-protein ligase that specifically mediates the formation of 'Lys-6'-linked polyubiquitin chains and plays a central role in DNA repair by facilitating cellular responses to DNA damage. It is unclear whether it also mediates the formation of other types of polyubiquitin chains. The BRCA1-BARD1 heterodimer coordinates a diverse range of cellular pathways such as DNA damage repair, ubiquitination and transcriptional regulation to maintain genomic stability. Regulates centrosomal microtubule nucleation. Required for appropriate cell cycle arrests after ionizing irradiation in both the S-phase and the G2 phase of the cell cycle. Required for FANCD2 targeting to sites of DNA damage. Inhibits lipid synthesis by binding to inactive phosphorylated ACACA and preventing its dephosphorylation. Contributes to homologous recombination repair (HRR) via its direct interaction with PALB2, fine-tunes recombinational repair partly through its modulatory role in the PALB2-dependent loading of BRCA2-RAD51 repair machinery at DNA breaks. Component of the BRCA1-RBBP8 complex which regulates CHEK1 activation and controls cell cycle G2/M checkpoints on DNA damage via BRCA1-mediated ubiquitination of RBBP8. Acts as a transcriptional activator. The sequence is that of Breast cancer type 1 susceptibility protein homolog (BRCA1) from Bos taurus (Bovine).